We begin with the raw amino-acid sequence, 230 residues long: Demethylmenaquinone methyltransferase (230 aa).

S-adenosyl-L-methionine-binding positions include Thr62, Asp80, 100–101, and Ser117; that span reads DA.

This sequence belongs to the class I-like SAM-binding methyltransferase superfamily. MenG/UbiE family.

The catalysed reaction is a 2-demethylmenaquinol + S-adenosyl-L-methionine = a menaquinol + S-adenosyl-L-homocysteine + H(+). It functions in the pathway quinol/quinone metabolism; menaquinone biosynthesis; menaquinol from 1,4-dihydroxy-2-naphthoate: step 2/2. In terms of biological role, methyltransferase required for the conversion of demethylmenaquinol (DMKH2) to menaquinol (MKH2). This Mycolicibacterium paratuberculosis (strain ATCC BAA-968 / K-10) (Mycobacterium paratuberculosis) protein is Demethylmenaquinone methyltransferase.